Here is a 138-residue protein sequence, read N- to C-terminus: Ribosomal RNA large subunit methyltransferase H (138 aa).

S-adenosyl-L-methionine-binding positions include L57, G86, and 105–110 (LSPLTF).

It belongs to the RNA methyltransferase RlmH family. As to quaternary structure, homodimer.

The protein resides in the cytoplasm. It catalyses the reaction pseudouridine(1915) in 23S rRNA + S-adenosyl-L-methionine = N(3)-methylpseudouridine(1915) in 23S rRNA + S-adenosyl-L-homocysteine + H(+). In terms of biological role, specifically methylates the pseudouridine at position 1915 (m3Psi1915) in 23S rRNA. This Prochlorococcus marinus (strain MIT 9301) protein is Ribosomal RNA large subunit methyltransferase H.